The following is an 819-amino-acid chain: Leucine--tRNA ligase (819 aa).

Residues 42 to 52 (PYPSGRLHMGH) carry the 'HIGH' region motif. The 'KMSKS' region motif lies at 576–580 (KMSKS). Residue Lys579 participates in ATP binding.

The protein belongs to the class-I aminoacyl-tRNA synthetase family.

It is found in the cytoplasm. The catalysed reaction is tRNA(Leu) + L-leucine + ATP = L-leucyl-tRNA(Leu) + AMP + diphosphate. The sequence is that of Leucine--tRNA ligase from Nitrosococcus oceani (strain ATCC 19707 / BCRC 17464 / JCM 30415 / NCIMB 11848 / C-107).